The sequence spans 345 residues: Trace amine-associated receptor 6 (345 aa).

At 1 to 32 (MSSNSSLLVAVQLCYPNVNGSCVETLYSPGSR) the chain is on the extracellular side. N4 and N19 each carry an N-linked (GlcNAc...) asparagine glycan. 2 cysteine pairs are disulfide-bonded: C22–C186 and C105–C190. The helical transmembrane segment at 33–53 (VILYIVFGFGAVLAVFGNLLV) threads the bilayer. Residues 54–68 (MISILHFKQLHSPTN) are Cytoplasmic-facing. Residues 69–89 (FLVASLACADFLVGVTVMPFS) traverse the membrane as a helical segment. The Extracellular segment spans residues 90–107 (MVRTVESCWYFGRSFCTF). A helical membrane pass occupies residues 108–128 (HTCCDVAFCYSSLFHLCFISI). Over 129 to 147 (DRYIAVTDPLVYPTKFTVS) the chain is Cytoplasmic. Residues 148 to 168 (VSGICISVSWILPLMYSGAVF) form a helical membrane-spanning segment. Residues 169 to 202 (YTGVYDDGLEELSDALNCIGGCQTVVNQNWVLID) are Extracellular-facing. The helical transmembrane segment at 203–223 (CLSFFIPTFIMIILYGNIFLV) threads the bilayer. Over 224–259 (ARRQAKKIENTGSKTESSSESYKARVARRERKAAKT) the chain is Cytoplasmic. The chain crosses the membrane as a helical span at residues 260-276 (LGVTVVAFMISWLPYSI). At 277 to 282 (DSLIDA) the chain is on the extracellular side. The chain crosses the membrane as a helical span at residues 283 to 302 (FMGFITPAYIYEICCWCAYY). Topologically, residues 303-345 (NSAMNPLIYALFYPWFRKAIKVIVTGQVLKNSSATMNLFSEHI) are cytoplasmic.

The protein belongs to the G-protein coupled receptor 1 family.

The protein resides in the cell membrane. Olfactory receptor specific for trace amines, such as beta-phenylethylamine (beta-PEA). Trace amine compounds are enriched in animal body fluids and act on trace amine-associated receptors (TAARs) to elicit both intraspecific and interspecific innate behaviors. Beta-PEA-binding causes a conformation change that triggers signaling via G(s)-class of G alpha proteins (GNAL or GNAS). This chain is Trace amine-associated receptor 6 (TAAR6), found in Pan troglodytes (Chimpanzee).